Consider the following 148-residue polypeptide: Small ribosomal subunit protein uS13 (148 aa).

A disordered region spans residues 128 to 148; sequence RGQRTKSTGRRGSTIGVRKKK.

The protein belongs to the universal ribosomal protein uS13 family. Part of the 30S ribosomal subunit. Forms a loose heterodimer with protein S19. Forms two bridges to the 50S subunit in the 70S ribosome.

In terms of biological role, located at the top of the head of the 30S subunit, it contacts several helices of the 16S rRNA. In the 70S ribosome it contacts the 23S rRNA (bridge B1a) and protein L5 of the 50S subunit (bridge B1b), connecting the 2 subunits; these bridges are implicated in subunit movement. In Methanococcoides burtonii (strain DSM 6242 / NBRC 107633 / OCM 468 / ACE-M), this protein is Small ribosomal subunit protein uS13.